The following is a 383-amino-acid chain: Protein KES1 (383 aa).

A compositionally biased stretch (basic and acidic residues) spans 317-339; that stretch reads FETASKDKARIENAQRQKRKDEA. Residues 317 to 346 form a disordered region; sequence FETASKDKARIENAQRQKRKDEAAAGTPHQ.

Belongs to the OSBP family.

In terms of biological role, lipid transporter involved in lipid countertransport between the Golgi complex and membranes of the endoplasmic reticulum: specifically exchanges sterol with phosphatidylinositol 4-phosphate (PI4P), delivering sterol to the Golgi in exchange for PI4P, which is degraded by the SAC1 phosphatase in the endoplasmic reticulum. The protein is Protein KES1 (KES1) of Mycosarcoma maydis (Corn smut fungus).